Consider the following 74-residue polypeptide: Small ribosomal subunit protein uS15 (74 aa).

Belongs to the universal ribosomal protein uS15 family. Part of the 30S ribosomal subunit. Forms a bridge to the 50S subunit in the 70S ribosome, contacting the 23S rRNA.

In terms of biological role, one of the primary rRNA binding proteins, it binds directly to 16S rRNA where it helps nucleate assembly of the platform of the 30S subunit by binding and bridging several RNA helices of the 16S rRNA. Its function is as follows. Forms an intersubunit bridge (bridge B4) with the 23S rRNA of the 50S subunit in the ribosome. The protein is Small ribosomal subunit protein uS15 of Onion yellows phytoplasma (strain OY-M).